Consider the following 261-residue polypeptide: Type III pantothenate kinase (261 aa).

ATP is bound at residue 6-13; that stretch reads DVGNTNTV. 107–110 contributes to the substrate binding site; that stretch reads GADR. The active-site Proton acceptor is Asp109. Asp129 lines the K(+) pocket. Residue Thr132 participates in ATP binding. Thr183 contacts substrate.

The protein belongs to the type III pantothenate kinase family. Homodimer. NH4(+) serves as cofactor. K(+) is required as a cofactor.

It is found in the cytoplasm. The catalysed reaction is (R)-pantothenate + ATP = (R)-4'-phosphopantothenate + ADP + H(+). It participates in cofactor biosynthesis; coenzyme A biosynthesis; CoA from (R)-pantothenate: step 1/5. Catalyzes the phosphorylation of pantothenate (Pan), the first step in CoA biosynthesis. The chain is Type III pantothenate kinase from Kosmotoga olearia (strain ATCC BAA-1733 / DSM 21960 / TBF 19.5.1).